A 68-amino-acid polypeptide reads, in one-letter code: Large ribosomal subunit protein bL35 (68 aa).

This sequence belongs to the bacterial ribosomal protein bL35 family.

The polypeptide is Large ribosomal subunit protein bL35 (Wolbachia pipientis subsp. Culex pipiens (strain wPip)).